We begin with the raw amino-acid sequence, 156 residues long: Transcription elongation factor GreA (156 aa).

A coiled-coil region spans residues 44 to 67; sequence ENAEYEAAKEKQAMIEGRIQDLCQ.

It belongs to the GreA/GreB family.

Necessary for efficient RNA polymerase transcription elongation past template-encoded arresting sites. The arresting sites in DNA have the property of trapping a certain fraction of elongating RNA polymerases that pass through, resulting in locked ternary complexes. Cleavage of the nascent transcript by cleavage factors such as GreA or GreB allows the resumption of elongation from the new 3'terminus. GreA releases sequences of 2 to 3 nucleotides. The sequence is that of Transcription elongation factor GreA from Syntrophobacter fumaroxidans (strain DSM 10017 / MPOB).